A 488-amino-acid polypeptide reads, in one-letter code: Ribulose bisphosphate carboxylase large chain (488 aa).

Asparagine 127 and threonine 177 together coordinate substrate. Lysine 179 serves as the catalytic Proton acceptor. Lysine 181 is a substrate binding site. Mg(2+)-binding residues include lysine 205, aspartate 207, and glutamate 208. The residue at position 205 (lysine 205) is an N6-carboxylysine. Histidine 297 serves as the catalytic Proton acceptor. Positions 298, 330, and 382 each coordinate substrate.

The protein belongs to the RuBisCO large chain family. Type I subfamily. In terms of assembly, heterohexadecamer of 8 large chains and 8 small chains. Mg(2+) is required as a cofactor.

It localises to the plastid. The protein localises to the chloroplast. It carries out the reaction 2 (2R)-3-phosphoglycerate + 2 H(+) = D-ribulose 1,5-bisphosphate + CO2 + H2O. The enzyme catalyses D-ribulose 1,5-bisphosphate + O2 = 2-phosphoglycolate + (2R)-3-phosphoglycerate + 2 H(+). In terms of biological role, ruBisCO catalyzes two reactions: the carboxylation of D-ribulose 1,5-bisphosphate, the primary event in carbon dioxide fixation, as well as the oxidative fragmentation of the pentose substrate in the photorespiration process. Both reactions occur simultaneously and in competition at the same active site. In Porphyra umbilicalis (Purple laver), this protein is Ribulose bisphosphate carboxylase large chain (rbcL).